Consider the following 294-residue polypeptide: Octopine-binding periplasmic protein (294 aa).

An N-terminal signal peptide occupies residues 1-20; it reads MRLKSIMCAALFVVAGQAAA. A disulfide bridge links cysteine 57 with cysteine 64.

It belongs to the bacterial solute-binding protein 3 family.

The protein localises to the periplasm. Its function is as follows. Component of the octopine active transport system probably consisting of four subunits: Q, M, P and T. This chain is Octopine-binding periplasmic protein (occT), found in Rhizobium meliloti (Ensifer meliloti).